The following is a 689-amino-acid chain: Methionine--tRNA ligase (689 aa).

The short motif at 15–25 (PYANGPIHLGH) is the 'HIGH' region element. Zn(2+)-binding residues include cysteine 146, cysteine 149, cysteine 159, and cysteine 162. The short motif at 332-336 (KMSKS) is the 'KMSKS' region element. Lysine 335 provides a ligand contact to ATP. A disordered region spans residues 554 to 574 (DAPKTAAPEKTAEASSVSSEP). A tRNA-binding domain is found at 588-689 (DFAKIDLRIA…EGAQPGMRVK (102 aa)).

The protein belongs to the class-I aminoacyl-tRNA synthetase family. MetG type 1 subfamily. As to quaternary structure, homodimer. It depends on Zn(2+) as a cofactor.

It is found in the cytoplasm. It catalyses the reaction tRNA(Met) + L-methionine + ATP = L-methionyl-tRNA(Met) + AMP + diphosphate. Its function is as follows. Is required not only for elongation of protein synthesis but also for the initiation of all mRNA translation through initiator tRNA(fMet) aminoacylation. This Shewanella baltica (strain OS185) protein is Methionine--tRNA ligase.